The primary structure comprises 152 residues: 3-dehydroquinate dehydratase (152 aa).

Residue tyrosine 23 is the Proton acceptor of the active site. Residues asparagine 74, histidine 80, and aspartate 87 each coordinate substrate. Histidine 100 (proton donor) is an active-site residue. Residues 101 to 102 (LS) and arginine 111 each bind substrate.

This sequence belongs to the type-II 3-dehydroquinase family. As to quaternary structure, homododecamer.

The catalysed reaction is 3-dehydroquinate = 3-dehydroshikimate + H2O. The protein operates within metabolic intermediate biosynthesis; chorismate biosynthesis; chorismate from D-erythrose 4-phosphate and phosphoenolpyruvate: step 3/7. Functionally, catalyzes a trans-dehydration via an enolate intermediate. The sequence is that of 3-dehydroquinate dehydratase from Clostridium botulinum (strain Langeland / NCTC 10281 / Type F).